Reading from the N-terminus, the 116-residue chain is uncharacterized protein (116 aa).

A run of 2 helical transmembrane segments spans residues valine 24–alanine 44 and valine 70–serine 90.

Its subcellular location is the membrane. This is an uncharacterized protein from Saccharomyces cerevisiae (strain ATCC 204508 / S288c) (Baker's yeast).